The following is a 508-amino-acid chain: Galactose-1-phosphate uridylyltransferase (508 aa).

The protein belongs to the galactose-1-phosphate uridylyltransferase type 2 family.

Its subcellular location is the cytoplasm. It catalyses the reaction alpha-D-galactose 1-phosphate + UDP-alpha-D-glucose = alpha-D-glucose 1-phosphate + UDP-alpha-D-galactose. Its pathway is carbohydrate metabolism; galactose metabolism. This Halalkalibacterium halodurans (strain ATCC BAA-125 / DSM 18197 / FERM 7344 / JCM 9153 / C-125) (Bacillus halodurans) protein is Galactose-1-phosphate uridylyltransferase (galT).